The chain runs to 483 residues: Keratin, type II cytoskeletal 8 (483 aa).

Polar residues predominate over residues 1 to 16 (MSIRVTQKSYKVSTSG). The segment at 1-41 (MSIRVTQKSYKVSTSGPRAFSSRSYTSGPGSRISSSSFSRV) is disordered. Residues 1–90 (MSIRVTQKSY…DPNIQAVRTQ (90 aa)) form a head region. A Phosphoserine; by PKC/PRKCE modification is found at Ser-9. A Glycyl lysine isopeptide (Lys-Gly) (interchain with G-Cter in SUMO2) cross-link involves residue Lys-11. 4 positions are modified to phosphoserine: Ser-13, Ser-15, Ser-21, and Ser-22. Omega-N-methylarginine is present on Arg-23. Ser-24 carries the phosphoserine; by PKC/PRKCE modification. Low complexity predominate over residues 24–41 (SYTSGPGSRISSSSFSRV). A Phosphothreonine modification is found at Thr-26. Ser-27 and Ser-31 each carry phosphoserine. At Arg-32 the chain carries Omega-N-methylarginine. Residues Ser-34, Ser-37, and Ser-39 each carry the phosphoserine modification. Omega-N-methylarginine is present on Arg-40. 2 positions are modified to phosphoserine: Ser-43 and Ser-44. Arg-47 carries the asymmetric dimethylarginine; alternate modification. Residue Arg-47 is modified to Omega-N-methylarginine; alternate. Position 74 is a phosphoserine; by MAPK (Ser-74). A coil 1A region spans residues 91–126 (EKEQIKTLNNKFASFIDKVRFLEQQNKMLETKWSLL). The IF rod domain occupies 91–402 (EKEQIKTLNN…KLLEGEESRL (312 aa)). N6-malonyllysine is present on Lys-101. Residues Lys-122 and Lys-130 each participate in a glycyl lysine isopeptide (Lys-Gly) (interchain with G-Cter in SUMO2) cross-link. The tract at residues 127-143 (QQQKTARSNMDNMFESY) is linker 1. The tract at residues 144–235 (INNLRRQLET…QLYEEEIREL (92 aa)) is coil 1B. Residue Lys-197 forms a Glycyl lysine isopeptide (Lys-Gly) (interchain with G-Cter in SUMO1); alternate linkage. Lys-197 is covalently cross-linked (Glycyl lysine isopeptide (Lys-Gly) (interchain with G-Cter in SUMO2); alternate). The residue at position 207 (Lys-207) is an N6-acetyllysine. Tyr-228 is subject to Phosphotyrosine. The interval 236-259 (QSQISDTSVVLSMDNSRSLDMDSI) is linker 12. Phosphoserine is present on residues Ser-253 and Ser-258. Positions 260–398 (IAEVKAQYED…ATYRKLLEGE (139 aa)) are coil 2. The necessary for interaction with PNN stretch occupies residues 261 to 382 (AEVKAQYEDI…EYQELMNVKL (122 aa)). Lys-264 participates in a covalent cross-link: Glycyl lysine isopeptide (Lys-Gly) (interchain with G-Cter in SUMO2). A Phosphoserine modification is found at Ser-274. Lys-285 is covalently cross-linked (Glycyl lysine isopeptide (Lys-Gly) (interchain with G-Cter in SUMO2)). Residue Ser-291 is modified to Phosphoserine. Lys-295 participates in a covalent cross-link: Glycyl lysine isopeptide (Lys-Gly) (interchain with G-Cter in SUMO2); alternate. Lys-295 bears the N6-acetyllysine; alternate mark. Residue Lys-304 forms a Glycyl lysine isopeptide (Lys-Gly) (interchain with G-Cter in SUMO2) linkage. Residue Lys-325 forms a Glycyl lysine isopeptide (Lys-Gly) (interchain with G-Cter in SUMO2); alternate linkage. Lys-325 is modified (N6-acetyllysine; alternate). At Ser-330 the chain carries Phosphoserine. Residue Lys-393 forms a Glycyl lysine isopeptide (Lys-Gly) (interchain with G-Cter in SUMO2) linkage. A tail region spans residues 399–483 (ESRLESGMQN…VSESSDVLPK (85 aa)). Ser-400, Ser-404, Ser-410, Ser-417, and Ser-424 each carry phosphoserine. The residue at position 432 (Ser-432) is a Phosphoserine; by CaMK2 and MAPK. A Glycyl lysine isopeptide (Lys-Gly) (interchain with G-Cter in SUMO1); alternate cross-link involves residue Lys-472. Lys-472 participates in a covalent cross-link: Glycyl lysine isopeptide (Lys-Gly) (interchain with G-Cter in SUMO2); alternate. Phosphoserine occurs at positions 475, 477, and 478.

It belongs to the intermediate filament family. Heterotetramer of two type I and two type II keratins. Forms a heterodimer with KRT18. Associates with KRT20. Interacts with PLEC isoform 1C, when in a heterodimer with KRT18. Interacts with PNN. When associated with KRT19, interacts with DMD. Interacts with TCHP. Interacts with APEX1. Interacts with GPER1. Interacts with EPPK1. Interacts with PKP1 and PKP2. In terms of assembly, (Microbial infection) Interacts with hepatitis C virus/HCV core protein. Phosphorylation on serine residues is enhanced during EGF stimulation and mitosis. Ser-74 phosphorylation plays an important role in keratin filament reorganization. In terms of processing, O-glycosylated. O-GlcNAcylation at multiple sites increases solubility, and decreases stability by inducing proteasomal degradation. Post-translationally, O-glycosylated (O-GlcNAcylated), in a cell cycle-dependent manner. As to expression, observed in muscle fibers accumulating in the costameres of myoplasm at the sarcolemma membrane in structures that contain dystrophin and spectrin. Expressed in gingival mucosa and hard palate of the oral cavity.

It localises to the cytoplasm. Its subcellular location is the nucleus. It is found in the nucleoplasm. The protein resides in the nucleus matrix. Together with KRT19, helps to link the contractile apparatus to dystrophin at the costameres of striated muscle. The protein is Keratin, type II cytoskeletal 8 (KRT8) of Homo sapiens (Human).